A 111-amino-acid polypeptide reads, in one-letter code: Flagellar hook-basal body complex protein FliE (111 aa).

This sequence belongs to the FliE family.

Its subcellular location is the bacterial flagellum basal body. The polypeptide is Flagellar hook-basal body complex protein FliE (Brucella abortus (strain S19)).